We begin with the raw amino-acid sequence, 145 residues long: MIIGIGSDICDIRRIETVLERHGERFLSRVFTTAERAKAERRNGRMRMGTYAKRFAAKEACAKALGTGFAGGVFMSDLGVVNLSSGQPTLRLTGGAAARLSAMTPSGMGAQVLLTMTDEYPYAYAQVVISAVPLPTSLIGGRGLP.

The Mg(2+) site is built by D8 and E59.

The protein belongs to the P-Pant transferase superfamily. AcpS family. It depends on Mg(2+) as a cofactor.

The protein localises to the cytoplasm. The enzyme catalyses apo-[ACP] + CoA = holo-[ACP] + adenosine 3',5'-bisphosphate + H(+). Functionally, transfers the 4'-phosphopantetheine moiety from coenzyme A to a Ser of acyl-carrier-protein. The protein is Holo-[acyl-carrier-protein] synthase of Granulibacter bethesdensis (strain ATCC BAA-1260 / CGDNIH1).